The chain runs to 427 residues: Trigger factor (427 aa).

Positions 163 to 248 (GNIAIIDFKG…VKGIKAKELP (86 aa)) constitute a PPIase FKBP-type domain.

It belongs to the FKBP-type PPIase family. Tig subfamily.

It localises to the cytoplasm. It carries out the reaction [protein]-peptidylproline (omega=180) = [protein]-peptidylproline (omega=0). In terms of biological role, involved in protein export. Acts as a chaperone by maintaining the newly synthesized protein in an open conformation. Functions as a peptidyl-prolyl cis-trans isomerase. The polypeptide is Trigger factor (Clostridium botulinum (strain Eklund 17B / Type B)).